Here is an 86-residue protein sequence, read N- to C-terminus: Beta-toxin CsEI (86 aa).

The N-terminal stretch at 1–19 (MNSLLMITACLVLIGTVWA) is a signal peptide. An LCN-type CS-alpha/beta domain is found at 20–84 (KDGYLVEKTG…TWPLPNKTCG (65 aa)). Disulfide bonds link cysteine 30-cysteine 83, cysteine 34-cysteine 59, cysteine 43-cysteine 64, and cysteine 47-cysteine 66. Position 83 is a cysteine amide (cysteine 83).

It belongs to the long (4 C-C) scorpion toxin superfamily. Sodium channel inhibitor family. Beta subfamily. Expressed by the venom gland.

It is found in the secreted. Functionally, beta toxins bind voltage-independently at site-4 of sodium channels (Nav) and shift the voltage of activation toward more negative potentials thereby affecting sodium channel activation and promoting spontaneous and repetitive firing. Affects channels from chicken and frog. This chain is Beta-toxin CsEI, found in Centruroides sculpturatus (Arizona bark scorpion).